Reading from the N-terminus, the 127-residue chain is Ribonuclease VapC9 (127 aa).

In terms of domain architecture, PINc spans 2-115 (IVVDASAALA…VTADLRLSDT (114 aa)). Aspartate 5 and aspartate 91 together coordinate Mg(2+).

Belongs to the PINc/VapC protein family. Requires Mg(2+) as cofactor.

Functionally, toxic component of a type II toxin-antitoxin (TA) system. An RNase. The cognate antitoxin is VapB9. The protein is Ribonuclease VapC9 of Mycobacterium tuberculosis (strain CDC 1551 / Oshkosh).